The primary structure comprises 262 residues: Ribosomal RNA small subunit methyltransferase A (262 aa).

Positions 14, 16, 41, 62, 87, and 109 each coordinate S-adenosyl-L-methionine.

Belongs to the class I-like SAM-binding methyltransferase superfamily. rRNA adenine N(6)-methyltransferase family. RsmA subfamily.

It is found in the cytoplasm. The enzyme catalyses adenosine(1518)/adenosine(1519) in 16S rRNA + 4 S-adenosyl-L-methionine = N(6)-dimethyladenosine(1518)/N(6)-dimethyladenosine(1519) in 16S rRNA + 4 S-adenosyl-L-homocysteine + 4 H(+). Functionally, specifically dimethylates two adjacent adenosines (A1518 and A1519) in the loop of a conserved hairpin near the 3'-end of 16S rRNA in the 30S particle. May play a critical role in biogenesis of 30S subunits. This Francisella tularensis subsp. novicida (strain U112) protein is Ribosomal RNA small subunit methyltransferase A.